The chain runs to 226 residues: DNA mismatch repair protein MutH (226 aa).

The protein belongs to the MutH family.

It localises to the cytoplasm. Sequence-specific endonuclease that cleaves unmethylated GATC sequences. It is involved in DNA mismatch repair. The chain is DNA mismatch repair protein MutH from Vibrio parahaemolyticus serotype O3:K6 (strain RIMD 2210633).